A 411-amino-acid chain; its full sequence is Probable indole-3-pyruvate monooxygenase YUCCA4 (411 aa).

Residue 21–26 (GAGPSG) participates in FAD binding. 183-188 (GCGNSG) serves as a coordination point for NADP(+).

Belongs to the FMO family. FAD serves as cofactor. Expressed in leaves, stems, flowers, buds and siliques. Detected in the apical gynoecium and in the developing ovules.

Its subcellular location is the cytoplasm. The protein resides in the endoplasmic reticulum membrane. The catalysed reaction is indole-3-pyruvate + NADPH + O2 + H(+) = (indol-3-yl)acetate + CO2 + NADP(+) + H2O. It participates in plant hormone metabolism; auxin biosynthesis. In terms of biological role, involved in auxin biosynthesis. Both isoforms are catalitically active. Involved during embryogenesis and seedling development. Required for the formation of floral organs and vascular tissues. Belongs to the set of redundant YUCCA genes probably responsible for auxin biosynthesis in shoots. This is Probable indole-3-pyruvate monooxygenase YUCCA4 (YUC4) from Arabidopsis thaliana (Mouse-ear cress).